A 346-amino-acid polypeptide reads, in one-letter code: Phosphate acyltransferase (346 aa).

Belongs to the PlsX family. In terms of assembly, homodimer. Probably interacts with PlsY.

The protein localises to the cytoplasm. It catalyses the reaction a fatty acyl-[ACP] + phosphate = an acyl phosphate + holo-[ACP]. It functions in the pathway lipid metabolism; phospholipid metabolism. Functionally, catalyzes the reversible formation of acyl-phosphate (acyl-PO(4)) from acyl-[acyl-carrier-protein] (acyl-ACP). This enzyme utilizes acyl-ACP as fatty acyl donor, but not acyl-CoA. The polypeptide is Phosphate acyltransferase (Brucella melitensis biotype 2 (strain ATCC 23457)).